The primary structure comprises 150 residues: Transcriptional repressor NrdR (150 aa).

A zinc finger spans residues 3-34; it reads CPFCAFADSKVVDSRPDKGGSTIRRRRECESC. In terms of domain architecture, ATP-cone spans 49–139; it reads PLVIKKDGRR…VYRSFKDITE (91 aa).

It belongs to the NrdR family. Zn(2+) is required as a cofactor.

In terms of biological role, negatively regulates transcription of bacterial ribonucleotide reductase nrd genes and operons by binding to NrdR-boxes. The polypeptide is Transcriptional repressor NrdR (Geotalea uraniireducens (strain Rf4) (Geobacter uraniireducens)).